The sequence spans 503 residues: Capsanthin/capsorubin synthase, chromoplastic (503 aa).

Residue 88-117 (VIIIGTGPAGLRLAEQVSSRHSVKVCCVDP) coordinates NAD(+).

It belongs to the lycopene cyclase family.

The protein localises to the plastid. It localises to the chromoplast. It catalyses the reaction all-trans-violaxanthin = all-trans-capsorubin. The enzyme catalyses all-trans-antheraxanthin = all-trans-capsanthin. Its pathway is carotenoid biosynthesis; capsanthin biosynthesis; capsanthin from antheraxanthin: step 1/1. The protein operates within carotenoid biosynthesis; capsorubin biosynthesis; capsorubin from violaxanthin: step 1/1. Functionally, catalyzes the conversion of the ubiquitous 5,6-epoxycarotenoids, antheraxanthin and violaxanthin, into capsanthin and capsorubin, respectively. This is Capsanthin/capsorubin synthase, chromoplastic (CCS) from Citrus sinensis (Sweet orange).